The primary structure comprises 36 residues: Amanexitide proprotein 1 (36 aa).

The propeptide occupies 1–10; it reads MSDINTARLP. The segment at residues 11-19 is a cross-link (cyclopeptide (Val-Pro)); the sequence is VFSLPVFFP. Positions 20–36 are excised as a propeptide; that stretch reads FVSDDIQAVLTRGESLC.

This sequence belongs to the MSDIN fungal toxin family. Processed by the macrocyclase-peptidase enzyme POPB to yield a toxic cyclic nonapeptide. POPB first removes 10 residues from the N-terminus. Conformational trapping of the remaining peptide forces the enzyme to release this intermediate rather than proceed to macrocyclization. The enzyme rebinds the remaining peptide in a different conformation and catalyzes macrocyclization of the N-terminal 9 residues. In terms of tissue distribution, expressed in basidiocarps.

In terms of biological role, cyclic nonapeptide that belongs to the MSDIN-like toxin family responsible for a large number of food poisoning cases and deaths. The polypeptide is Amanexitide proprotein 1 (Amanita exitialis (Guangzhou destroying angel)).